The primary structure comprises 948 residues: Protocadherin alpha-10 (948 aa).

The signal sequence occupies residues 1–28; that stretch reads MVSRCSCLGVQCLLLSLLLLAAWEVGSG. Cadherin domains follow at residues 29–132, 133–241, 242–349, 350–454, 455–564, and 587–689; these read QLHY…PPRF, SVTE…APIF, DRPV…SPEV, IVTS…APAF, AQPE…APAL, and GHVV…APEV. The Extracellular segment spans residues 29–695; the sequence is QLHYSVYEEA…APEVALVDVN (667 aa). 2 N-linked (GlcNAc...) asparagine glycosylation sites follow: N256 and N264. A glycan (N-linked (GlcNAc...) asparagine) is linked at N547. The helical transmembrane segment at 696–716 threads the bilayer; that stretch reads VYLIIAICAVSSLLVLTLLLY. Over 717 to 948 the chain is Cytoplasmic; it reads TALRCSAAPT…GNSTTDNSDQ (232 aa). 6 PXXP repeats span residues 732 to 735, 772 to 775, 797 to 800, 830 to 833, 871 to 874, and 889 to 892; these read PVKP, PSLP, PRQP, PGGP, PGNP, and PGSP. The segment at 732 to 892 is 6 X 4 AA repeats of P-X-X-P; that stretch reads PVKPTLVCSS…PDKFIIPGSP (161 aa). Disordered stretches follow at residues 783–804 and 827–948; these read DGED…NPDW and RAGP…NSDQ. The span at 907-921 shows a compositional bias: basic and acidic residues; sequence DKSDFITFGKKEETK.

It localises to the cell membrane. Potential calcium-dependent cell-adhesion protein. May be involved in the establishment and maintenance of specific neuronal connections in the brain. The polypeptide is Protocadherin alpha-10 (PCDHA10) (Pan troglodytes (Chimpanzee)).